Consider the following 176-residue polypeptide: Vitamin K epoxide reductase complex subunit 1-like protein 1 (176 aa).

The Cytoplasmic portion of the chain corresponds to 1 to 13 (MAAPVLLRVSVPR). A helical transmembrane segment spans residues 14 to 36 (WERVARYAVCAAGILLSIYAYHV). The Lumenal portion of the chain corresponds to 37–87 (EREKERDPEHRALCDLGPWVKCSAALASRWGRGFGLLGSIFGKDGVLNQPN). A disulfide bond links C50 and C58. Position 87 (N87) interacts with (S)-warfarin. The chain crosses the membrane as a helical span at residues 88-102 (SVFGLIFYILQLLLG). Over 103 to 107 (MTASA) the chain is Cytoplasmic. A helical transmembrane segment spans residues 108–135 (VAALILMTSSIMSVVGSLYLAYILYFVL). The Lumenal portion of the chain corresponds to 136-138 (KEF). C139 and C142 are joined by a disulfide. Residues 139–160 (CIICIVTYVLNFLLLIINYKRL) traverse the membrane as a helical segment. Phylloquinone contacts are provided by C142 and Y146. Y146 contributes to the (S)-warfarin binding site. Over 161-176 (VYLNEAWKRQLQPKQD) the chain is Cytoplasmic.

This sequence belongs to the VKOR family.

The protein resides in the endoplasmic reticulum membrane. The enzyme catalyses phylloquinone + [protein]-disulfide + H2O = 2,3-epoxyphylloquinone + [protein]-dithiol. It catalyses the reaction phylloquinol + [protein]-disulfide = phylloquinone + [protein]-dithiol. With respect to regulation, inhibited by warfarin (coumadin). Warfarin locks VKORC1 in both redox states into the closed conformation. Functionally, involved in vitamin K metabolism. Can reduce inactive vitamin K 2,3-epoxide to active vitamin K, and may contribute to vitamin K-mediated protection against oxidative stress. Plays a role in vitamin K-dependent gamma-carboxylation of Glu residues in target proteins. This is Vitamin K epoxide reductase complex subunit 1-like protein 1 (VKORC1L1) from Homo sapiens (Human).